The primary structure comprises 174 residues: Crossover junction endodeoxyribonuclease RuvC (174 aa).

Active-site residues include D8, E67, and D139. Residues D8, E67, and D139 each coordinate Mg(2+).

The protein belongs to the RuvC family. In terms of assembly, homodimer which binds Holliday junction (HJ) DNA. The HJ becomes 2-fold symmetrical on binding to RuvC with unstacked arms; it has a different conformation from HJ DNA in complex with RuvA. In the full resolvosome a probable DNA-RuvA(4)-RuvB(12)-RuvC(2) complex forms which resolves the HJ. The cofactor is Mg(2+).

The protein resides in the cytoplasm. The enzyme catalyses Endonucleolytic cleavage at a junction such as a reciprocal single-stranded crossover between two homologous DNA duplexes (Holliday junction).. Its function is as follows. The RuvA-RuvB-RuvC complex processes Holliday junction (HJ) DNA during genetic recombination and DNA repair. Endonuclease that resolves HJ intermediates. Cleaves cruciform DNA by making single-stranded nicks across the HJ at symmetrical positions within the homologous arms, yielding a 5'-phosphate and a 3'-hydroxyl group; requires a central core of homology in the junction. The consensus cleavage sequence is 5'-(A/T)TT(C/G)-3'. Cleavage occurs on the 3'-side of the TT dinucleotide at the point of strand exchange. HJ branch migration catalyzed by RuvA-RuvB allows RuvC to scan DNA until it finds its consensus sequence, where it cleaves and resolves the cruciform DNA. The chain is Crossover junction endodeoxyribonuclease RuvC from Pseudomonas entomophila (strain L48).